Reading from the N-terminus, the 729-residue chain is Cullin-6 (729 aa).

The Cullin neddylation domain maps to 659–720 (DRKYEIKACI…EQLYIRRSEN (62 aa)). Lysine 673 is covalently cross-linked (Glycyl lysine isopeptide (Lys-Gly) (interchain with G-Cter in NEDD8)).

This sequence belongs to the cullin family. In terms of assembly, probably interacts with skr-3. Neddylated; which enhances the ubiquitination activity of SCF-like complex.

Probable core component of cullin-based SCF-like E3 ubiquitin-protein ligase complexes which mediate the ubiquitination and subsequent proteasomal degradation of target proteins. The sequence is that of Cullin-6 (cul-6) from Caenorhabditis elegans.